Here is a 166-residue protein sequence, read N- to C-terminus: Transcription antitermination protein NusB (166 aa).

The segment covering 1–18 has biased composition (basic and acidic residues); that stretch reads MISDESDRFNPRDPKPAD. A disordered region spans residues 1-28; sequence MISDESDRFNPRDPKPADAGKPSKSAKR.

This sequence belongs to the NusB family.

Involved in transcription antitermination. Required for transcription of ribosomal RNA (rRNA) genes. Binds specifically to the boxA antiterminator sequence of the ribosomal RNA (rrn) operons. This Pseudomonas putida (strain W619) protein is Transcription antitermination protein NusB.